An 89-amino-acid chain; its full sequence is Sec translocon accessory complex subunit YrbF (89 aa).

A helical transmembrane segment spans residues 4–24 (GTLGTLVPIILMFAVLYFLLI).

Belongs to the YajC family. As to quaternary structure, part of the SecDF-YidC-YajC translocase complex. The SecDF-YidC-YajC translocase forms a supercomplex with SecYEG, called the holo-translocon (HTL).

The protein resides in the cell membrane. Its function is as follows. The SecYEG-SecDF-YajC-YidC holo-translocon (HTL) protein secretase/insertase is a supercomplex required for protein secretion, insertion of proteins into membranes, and assembly of membrane protein complexes. While the SecYEG complex is essential for assembly of a number of proteins and complexes, the SecDF-YajC-YidC subcomplex facilitates these functions. The chain is Sec translocon accessory complex subunit YrbF (yrbF) from Bacillus subtilis (strain 168).